A 128-amino-acid polypeptide reads, in one-letter code: Large ribosomal subunit protein bL21 (128 aa).

The interval 104 to 128 (GKSPSVGPRPKRVKAEPAPAADAAE) is disordered. Residues 119–128 (EPAPAADAAE) are compositionally biased toward low complexity.

The protein belongs to the bacterial ribosomal protein bL21 family. As to quaternary structure, part of the 50S ribosomal subunit. Contacts protein L20.

In terms of biological role, this protein binds to 23S rRNA in the presence of protein L20. In Rhodopseudomonas palustris (strain HaA2), this protein is Large ribosomal subunit protein bL21.